The sequence spans 923 residues: Inorganic phosphate transporter PHO87 (923 aa).

The 334-residue stretch at 1 to 334 (MRFSHFLKYN…HMNTRQELIE (334 aa)) folds into the SPX domain. Over 1–461 (MRFSHFLKYN…KLFFGKRAMK (461 aa)) the chain is Extracellular. Disordered regions lie at residues 40-74 (ETPTGDLNDDADSQTPGPIADIESNIAAGEPSSSK) and 86-107 (FGSKTPSGSKRGDSDEKAIDGN). The segment covering 95 to 104 (KRGDSDEKAI) has biased composition (basic and acidic residues). Lysine 102 participates in a covalent cross-link: Glycyl lysine isopeptide (Lys-Gly) (interchain with G-Cter in ubiquitin). Asparagine 162, asparagine 202, and asparagine 274 each carry an N-linked (GlcNAc...) asparagine glycan. Residues 462 to 482 (IGFIIIVTGVLLGVKTFNDPV) form a helical membrane-spanning segment. The Cytoplasmic segment spans residues 483 to 493 (EHRCMALVECC). Residues 494–514 (AFLWASEAIPLHITGLLVPLL) form a helical membrane-spanning segment. Topologically, residues 515-537 (TVLFRVLKDDDGKVMGAAAASTE) are extracellular. A helical membrane pass occupies residues 538 to 558 (ILGTMWSSTIMILLAGFTLGE). The Cytoplasmic portion of the chain corresponds to 559–583 (ALSQYNVAKVLASWLLALAGTKPRN). A helical transmembrane segment spans residues 584 to 604 (VLLMAMSVVFFLSMWISNVAS). Topologically, residues 605–627 (PVLTYSLLTPLLDPLDYTSPFAK) are extracellular. A helical membrane pass occupies residues 628-648 (ALVMGVALSADIGGMASPISS). Residues 649 to 667 (PQNIISMQYLKPYGIGWGQ) lie on the Cytoplasmic side of the membrane. Residues 668–688 (FFAVALPTGILSMLCSWALMI) form a helical membrane-spanning segment. Topologically, residues 689–707 (LTFKIGKTKLEKFKPIRTR) are extracellular. Residues 708–728 (FTIKQYFIIIVTIATILLWCV) traverse the membrane as a helical segment. Residues 729-735 (ESQIESA) lie on the Cytoplasmic side of the membrane. The helical transmembrane segment at 736-756 (FGSSGEIAVIPIVLFFGTGLL) threads the bilayer. At 757–767 (STKDFNTFPWS) the chain is on the extracellular side. The helical transmembrane segment at 768–788 (IVVLAMGGIALGKAVSSSGLL) threads the bilayer. The Cytoplasmic portion of the chain corresponds to 789-802 (VTIARALQKKIQND). Residues 803-823 (GVFAILCIFGILMLVVGTFVS) traverse the membrane as a helical segment. The Extracellular portion of the chain corresponds to 824–849 (HTVSAIIIIPLVQEVGDKLSDPKAAP). A helical membrane pass occupies residues 850 to 870 (ILVFGCALLASCGMGLASSGF). Residues 871–898 (PNVTAISMTDKKGNRWLTVGAFISRGVP) lie on the Cytoplasmic side of the membrane. The helical transmembrane segment at 899 to 919 (ASLLAFVCVITLGYGISSSVL) threads the bilayer. Residues 920 to 923 (KGST) lie on the Extracellular side of the membrane.

It belongs to the CitM (TC 2.A.11) transporter family.

It is found in the membrane. In terms of biological role, involved in the uptake of inorganic phosphate. This is Inorganic phosphate transporter PHO87 (PHO87) from Saccharomyces cerevisiae (strain ATCC 204508 / S288c) (Baker's yeast).